The chain runs to 248 residues: 2,3-bisphosphoglycerate-dependent phosphoglycerate mutase (248 aa).

Substrate contacts are provided by residues 8–15 (RHGESEWN), 21–22 (TG), R60, 87–90 (ERHY), K98, 114–115 (RR), and 183–184 (GN). Residue H9 is the Tele-phosphohistidine intermediate of the active site. Residue E87 is the Proton donor/acceptor of the active site.

Belongs to the phosphoglycerate mutase family. BPG-dependent PGAM subfamily.

It catalyses the reaction (2R)-2-phosphoglycerate = (2R)-3-phosphoglycerate. Its pathway is carbohydrate degradation; glycolysis; pyruvate from D-glyceraldehyde 3-phosphate: step 3/5. Functionally, catalyzes the interconversion of 2-phosphoglycerate and 3-phosphoglycerate. The protein is 2,3-bisphosphoglycerate-dependent phosphoglycerate mutase of Borreliella afzelii (strain PKo) (Borrelia afzelii).